A 443-amino-acid chain; its full sequence is MSEMTPREIVSELDKHIIGQDNAKRSVAIALRNRWRRMQLNEELRHEVTPKNILMIGPTGVGKTEIARRLAKLANAPFIKVEATKFTEVGYVGKEVDSIIRDLTDAAVKMVRVQAIEKNRYRAEELAEERILDVLIPPAKNNWGQTEQQQEPSAARQAFRKKLREGQLDDKEIEIDLAAAPMGVEIMAPPGMEEMTSQLQSMFQNLGGQKQKARKLKIKDAMKLLIEEEAAKLVNPEELKQDAIDAVEQHGIVFIDEIDKICKRGESSGPDVSREGVQRDLLPLVEGCTVSTKHGMVKTDHILFIASGAFQIAKPSDLIPELQGRLPIRVELQALTTSDFERILTEPNASITVQYKALMATEGVNIEFTDSGIKRIAEAAWQVNESTENIGARRLHTVLERLMEEISYDASDLSGQTITIDADYVSKHLDALVADEDLSRFIL.

Residues I18, 60 to 65, D256, E321, and R393 each bind ATP; that span reads GVGKTE.

This sequence belongs to the ClpX chaperone family. HslU subfamily. As to quaternary structure, a double ring-shaped homohexamer of HslV is capped on each side by a ring-shaped HslU homohexamer. The assembly of the HslU/HslV complex is dependent on binding of ATP.

It is found in the cytoplasm. Its function is as follows. ATPase subunit of a proteasome-like degradation complex; this subunit has chaperone activity. The binding of ATP and its subsequent hydrolysis by HslU are essential for unfolding of protein substrates subsequently hydrolyzed by HslV. HslU recognizes the N-terminal part of its protein substrates and unfolds these before they are guided to HslV for hydrolysis. In Escherichia coli O17:K52:H18 (strain UMN026 / ExPEC), this protein is ATP-dependent protease ATPase subunit HslU.